The following is a 304-amino-acid chain: Secreted mono- and diacylglycerol lipase MDL4 (304 aa).

The signal sequence occupies residues 1 to 19 (MRFGGVVSLVLGFIVSVLA). Cys-55 and Cys-297 are joined by a disulfide. 2 N-linked (GlcNAc...) asparagine glycosylation sites follow: Asn-102 and Asn-161. The active-site Nucleophile is the Ser-171. Asp-228 is an active-site residue. N-linked (GlcNAc...) asparagine glycosylation is present at Asn-253. The active site involves His-281.

Belongs to the AB hydrolase superfamily. Lipase family. Class 3 subfamily.

Its subcellular location is the secreted. The protein resides in the cell wall. The enzyme catalyses a monoacylglycerol + H2O = glycerol + a fatty acid + H(+). It catalyses the reaction a diacylglycerol + H2O = a monoacylglycerol + a fatty acid + H(+). In terms of biological role, secreted lipase involved in Dandruff and seborrheic dermatitis (D/SD) probably via lipase-mediated breakdown of sebaceous lipids and release of irritating free fatty acids. Shows activity against monoglyceride and diglyceride substrates, but not triglyceride substrates and does not exhibit regio-selective production of diacylglycerols. Cleaves oleic acid from 1,2 isomers of diolein on both the 1 and the 2 position of the glycerol backbone, resulting mainly in free fatty acids but no monoolein is detected. Shows activity on monoolein and liberates mostly free fatty acids, but can also perform the reverse reaction and produce diolein. This chain is Secreted mono- and diacylglycerol lipase MDL4, found in Malassezia globosa (strain ATCC MYA-4612 / CBS 7966) (Dandruff-associated fungus).